A 477-amino-acid polypeptide reads, in one-letter code: Aspartyl/glutamyl-tRNA(Asn/Gln) amidotransferase subunit B (477 aa).

This sequence belongs to the GatB/GatE family. GatB subfamily. In terms of assembly, heterotrimer of A, B and C subunits.

It catalyses the reaction L-glutamyl-tRNA(Gln) + L-glutamine + ATP + H2O = L-glutaminyl-tRNA(Gln) + L-glutamate + ADP + phosphate + H(+). The enzyme catalyses L-aspartyl-tRNA(Asn) + L-glutamine + ATP + H2O = L-asparaginyl-tRNA(Asn) + L-glutamate + ADP + phosphate + 2 H(+). In terms of biological role, allows the formation of correctly charged Asn-tRNA(Asn) or Gln-tRNA(Gln) through the transamidation of misacylated Asp-tRNA(Asn) or Glu-tRNA(Gln) in organisms which lack either or both of asparaginyl-tRNA or glutaminyl-tRNA synthetases. The reaction takes place in the presence of glutamine and ATP through an activated phospho-Asp-tRNA(Asn) or phospho-Glu-tRNA(Gln). In Sulfurovum sp. (strain NBC37-1), this protein is Aspartyl/glutamyl-tRNA(Asn/Gln) amidotransferase subunit B.